We begin with the raw amino-acid sequence, 442 residues long: Myb family transcription factor PHL13 (442 aa).

Positions 235-295 (MTSKQRMRWT…HLQKYRTARY (61 aa)) constitute an HTH myb-type domain. The segment at residues 266 to 291 (PKAVLKLINSPGLTVYHVKSHLQKYR) is a DNA-binding region (H-T-H motif). Positions 329-349 (TEALRLQMKVQKQLHEQLEIQ) are coiled coil. Positions 342–347 (LHEQLE) match the LHEQLE motif. Positions 370–380 (QQKMQENKKDS) are enriched in basic and acidic residues. Residues 370–442 (QQKMQENKKD…TSNRKRVRED (73 aa)) form a disordered region. Residues 395 to 434 (SPNLSQPFLHKATNSEPSITQKLQNGSSTMDQSESTSGTS) are compositionally biased toward polar residues.

This sequence belongs to the MYB-CC family.

It localises to the nucleus. This chain is Myb family transcription factor PHL13, found in Arabidopsis thaliana (Mouse-ear cress).